A 372-amino-acid polypeptide reads, in one-letter code: Protein phosphatase Mn(2+)-dependent 1K (372 aa).

The N-terminal 29 residues, 1-29 (MSTAALITLVRSGGNQVRRRVLLSSRLLQ), are a transit peptide targeting the mitochondrion. The interval 34 to 55 (VTPTCHSSTSEPRCSRFDPDGS) is disordered. Residues 46–61 (RCSRFDPDGSGSPATW) are critical for association with the BCKDH complex. Residues 94–346 (NVGCASQIGK…DNSTAVVVPF (253 aa)) enclose the PPM-type phosphatase domain. Aspartate 127 and glycine 128 together coordinate Mn(2+). Phosphoserine is present on serine 248. Mn(2+) is bound by residues aspartate 298 and aspartate 337.

The protein belongs to the PP2C family. Monomer. Interacts with E1 and E2 components of the branched-chain alpha-ketoacid dehydrogenase (BCKDH) complex; this interaction requires colocalization in mitochondria. Interacts with BCKDHA but not with BCKDHB of the E1 component. Interacts with the 24-meric E2 core composed of DBT monomers with a 24:1 stoichiometry; the N-terminal region (residues 49-61) of PPM1K and C-terminal linker of the lipoyl domain of DBT (residues 145-160) are critical for this interaction, whereas the lipoyl prosthetic group is dispensable. Competes with BCKDK for binding to the E2 core; this interaction is modulated by branched-chain alpha-keto acids. At steady state, BCKDH holoenzyme preferentially binds BCKDK and BCKDHA is phosphorylated. In response to high levels of branched-chain alpha-keto acids, the inhibitory BCKDK is replaced by activating PPM1K leading to BCKDHA dephosphorylation and BCAA degradation. It depends on Mn(2+) as a cofactor.

Its subcellular location is the mitochondrion matrix. The enzyme catalyses O-phospho-L-seryl-[3-methyl-2-oxobutanoate dehydrogenase] + H2O = L-seryl-[3-methyl-2-oxobutanoate dehydrogenase] + phosphate. The catalysed reaction is O-phospho-L-seryl-[protein] + H2O = L-seryl-[protein] + phosphate. It participates in protein modification. Its activity is regulated as follows. Up-regulated upon interaction with the 24-meric DBT/E2 core of the BCKDH complex. Inhibited by Mg(2+) and Ca(2+) ions likely by competing with Mn(2+) ions for binding to the same metal-binding sites. Functionally, serine/threonine-protein phosphatase component of macronutrients metabolism. Forms a functional kinase and phosphatase pair with BCKDK, serving as a metabolic regulatory node that coordinates branched-chain amino acids (BCAAs) with glucose and lipid metabolism via two distinct phosphoprotein targets: mitochondrial BCKDHA subunit of the branched-chain alpha-ketoacid dehydrogenase (BCKDH) complex and cytosolic ACLY, a lipogenic enzyme of Krebs cycle. At high levels of branched-chain ketoacids, dephosphorylates and activates mitochondrial BCKDH complex, a multisubunit complex consisting of three multimeric components each involved in different steps of BCAA catabolism: E1 composed of BCKDHA and BCKDHB, E2 core composed of DBT monomers, and E3 composed of DLD monomers. Tightly associates with the E2 component of BCKDH complex and dephosphorylates BCKDHA on Ser-337. Regulates the reversible phosphorylation of ACLY in response to changes in cellular carbohydrate abundance such as occurs during fasting to feeding metabolic transition. At fasting state, appears to dephosphorylate ACLY on Ser-455 and inactivate it. Refeeding stimulates MLXIPL/ChREBP transcription factor, leading to increased BCKDK to PPM1K expression ratio, phosphorylation and activation of ACLY that ultimately results in the generation of malonyl-CoA and oxaloacetate immediate substrates of de novo lipogenesis and gluconeogenesis, respectively. Recognizes phosphosites having SxS or RxxS motifs and strictly depends on Mn(2+) ions for the phosphatase activity. Regulates Ca(2+)-induced opening of mitochondrial transition pore and apoptotic cell death. This chain is Protein phosphatase Mn(2+)-dependent 1K, found in Homo sapiens (Human).